The chain runs to 102 residues: Small ribosomal subunit protein uS10c (102 aa).

This sequence belongs to the universal ribosomal protein uS10 family. Part of the 30S ribosomal subunit.

It localises to the plastid. The protein localises to the chloroplast. Functionally, involved in the binding of tRNA to the ribosomes. This chain is Small ribosomal subunit protein uS10c, found in Guillardia theta (Cryptophyte).